Reading from the N-terminus, the 563-residue chain is Glutamate--tRNA ligase (563 aa).

The tract at residues 61 to 94 (PEEQQKEVESLGGLEQHTKKEEKPKGLPELKNTE) is disordered. The span at 76–94 (QHTKKEEKPKGLPELKNTE) shows a compositional bias: basic and acidic residues. The 'HIGH' region signature appears at 104–114 (PNPSGPLHIGH).

It belongs to the class-I aminoacyl-tRNA synthetase family. Glutamate--tRNA ligase type 2 subfamily.

The protein resides in the cytoplasm. It carries out the reaction tRNA(Glu) + L-glutamate + ATP = L-glutamyl-tRNA(Glu) + AMP + diphosphate. Catalyzes the attachment of glutamate to tRNA(Glu) in a two-step reaction: glutamate is first activated by ATP to form Glu-AMP and then transferred to the acceptor end of tRNA(Glu). This chain is Glutamate--tRNA ligase, found in Methanosphaera stadtmanae (strain ATCC 43021 / DSM 3091 / JCM 11832 / MCB-3).